The following is a 206-amino-acid chain: Probable GTP-binding protein EngB (206 aa).

The region spanning 25–198 is the EngB-type G domain; the sequence is SRAEVAFAGR…AVRIEGWLAP (174 aa). Mg(2+)-binding residues include serine 40 and threonine 62.

Belongs to the TRAFAC class TrmE-Era-EngA-EngB-Septin-like GTPase superfamily. EngB GTPase family. Mg(2+) is required as a cofactor.

In terms of biological role, necessary for normal cell division and for the maintenance of normal septation. The protein is Probable GTP-binding protein EngB of Thiobacillus denitrificans (strain ATCC 25259 / T1).